The following is an 832-amino-acid chain: FAST kinase domain-containing protein 1, mitochondrial (832 aa).

The region spanning 765 to 825 is the RAP domain; the sequence is VAIEFLDSKA…KDAWMDYLRK (61 aa).

It belongs to the FAST kinase family.

The protein resides in the mitochondrion. Functionally, may regulate the stability of some mitochondrial mRNA species. This Xenopus laevis (African clawed frog) protein is FAST kinase domain-containing protein 1, mitochondrial (fastkd1).